Here is a 100-residue protein sequence, read N- to C-terminus: Small ribosomal subunit protein bS18c (100 aa).

Positions 81 to 100 are disordered; that stretch reads KQFERTESTPRTTGPRTRKK. The segment covering 89-100 has biased composition (low complexity); it reads TPRTTGPRTRKK.

This sequence belongs to the bacterial ribosomal protein bS18 family. Part of the 30S ribosomal subunit.

It localises to the plastid. It is found in the chloroplast. This Nandina domestica (Heavenly bamboo) protein is Small ribosomal subunit protein bS18c.